Reading from the N-terminus, the 300-residue chain is Tyrosine recombinase XerC (300 aa).

Residues 1-86 (MESVLDAFDQ…AVKTFTAWAV (86 aa)) form the Core-binding (CB) domain. One can recognise a Tyr recombinase domain in the interval 107 to 294 (TLPAVLRQDQ…TVARLRAVHD (188 aa)). Residues Arg-151, Lys-175, His-246, Arg-249, and His-272 contribute to the active site. Tyr-281 (O-(3'-phospho-DNA)-tyrosine intermediate) is an active-site residue.

It belongs to the 'phage' integrase family. XerC subfamily. Forms a cyclic heterotetrameric complex composed of two molecules of XerC and two molecules of XerD.

It is found in the cytoplasm. In terms of biological role, site-specific tyrosine recombinase, which acts by catalyzing the cutting and rejoining of the recombining DNA molecules. The XerC-XerD complex is essential to convert dimers of the bacterial chromosome into monomers to permit their segregation at cell division. It also contributes to the segregational stability of plasmids. The polypeptide is Tyrosine recombinase XerC (Mycobacterium sp. (strain JLS)).